A 267-amino-acid chain; its full sequence is 2-keto-3-deoxy-L-rhamnonate aldolase (267 aa).

Residue H49 is the Proton acceptor of the active site. Residue Q151 participates in substrate binding. E153 contacts Mg(2+). Residues A178 and D179 each contribute to the substrate site. D179 contacts Mg(2+).

It belongs to the HpcH/HpaI aldolase family. KDR aldolase subfamily. Homohexamer. It depends on Mg(2+) as a cofactor.

The enzyme catalyses 2-dehydro-3-deoxy-L-rhamnonate = (S)-lactaldehyde + pyruvate. Its function is as follows. Catalyzes the reversible retro-aldol cleavage of 2-keto-3-deoxy-L-rhamnonate (KDR) to pyruvate and lactaldehyde. The polypeptide is 2-keto-3-deoxy-L-rhamnonate aldolase (Salmonella gallinarum (strain 287/91 / NCTC 13346)).